The following is a 511-amino-acid chain: Mediator of RNA polymerase II transcription subunit 17 (511 aa).

It belongs to the Mediator complex subunit 17 family. In terms of assembly, component of the Mediator complex.

It is found in the nucleus. Its function is as follows. Component of the Mediator complex, a coactivator involved in the regulated transcription of nearly all RNA polymerase II-dependent genes. Mediator functions as a bridge to convey information from gene-specific regulatory proteins to the basal RNA polymerase II transcription machinery. Mediator is recruited to promoters by direct interactions with regulatory proteins and serves as a scaffold for the assembly of a functional preinitiation complex with RNA polymerase II and the general transcription factors. This is Mediator of RNA polymerase II transcription subunit 17 (SRB4) from Yarrowia lipolytica (strain CLIB 122 / E 150) (Yeast).